Consider the following 383-residue polypeptide: Succinyl-diaminopimelate desuccinylase (383 aa).

His74 provides a ligand contact to Zn(2+). The active site involves Asp76. Position 107 (Asp107) interacts with Zn(2+). Residue Glu141 is the Proton acceptor of the active site. Zn(2+) is bound by residues Glu142, Glu170, and His356.

Belongs to the peptidase M20A family. DapE subfamily. Homodimer. Zn(2+) serves as cofactor. It depends on Co(2+) as a cofactor.

The enzyme catalyses N-succinyl-(2S,6S)-2,6-diaminopimelate + H2O = (2S,6S)-2,6-diaminopimelate + succinate. It participates in amino-acid biosynthesis; L-lysine biosynthesis via DAP pathway; LL-2,6-diaminopimelate from (S)-tetrahydrodipicolinate (succinylase route): step 3/3. In terms of biological role, catalyzes the hydrolysis of N-succinyl-L,L-diaminopimelic acid (SDAP), forming succinate and LL-2,6-diaminopimelate (DAP), an intermediate involved in the bacterial biosynthesis of lysine and meso-diaminopimelic acid, an essential component of bacterial cell walls. The protein is Succinyl-diaminopimelate desuccinylase of Cupriavidus necator (strain ATCC 17699 / DSM 428 / KCTC 22496 / NCIMB 10442 / H16 / Stanier 337) (Ralstonia eutropha).